We begin with the raw amino-acid sequence, 373 residues long: Glutamate 5-kinase (373 aa).

Residue K15 coordinates ATP. 3 residues coordinate substrate: S55, D142, and N154. Residue 174-175 (TD) participates in ATP binding. The PUA domain maps to 281-359 (RGSVVLDDGA…SQIEAVLGYV (79 aa)).

This sequence belongs to the glutamate 5-kinase family.

The protein resides in the cytoplasm. It carries out the reaction L-glutamate + ATP = L-glutamyl 5-phosphate + ADP. It participates in amino-acid biosynthesis; L-proline biosynthesis; L-glutamate 5-semialdehyde from L-glutamate: step 1/2. Catalyzes the transfer of a phosphate group to glutamate to form L-glutamate 5-phosphate. The polypeptide is Glutamate 5-kinase (Nitrosomonas eutropha (strain DSM 101675 / C91 / Nm57)).